The chain runs to 249 residues: MRILISNDDGVTAPGIAALHAALADYAECAVIAPDQDKSGASSSLTLDRPLHPQTLANGFISLNGTPTDCVHLGLNGLLPQMPDMVVSGINLGANLGDDVLYSGTVAAALEGRFLGGTSLAFSLLSRQPDNLPTAAYIARRLVEAQSRLVLPPRTVLNVNIPNLPLEHIRGIQLTRLGHRARAAAPTKVVNPRGKEGYWIAVAGDAEDGGPGTDFHAVMQGYVSITPLQLDRTFNDAFEQLDGWLEGLL.

A divalent metal cation is bound by residues Asp-8, Asp-9, Ser-39, and Asn-91.

Belongs to the SurE nucleotidase family. It depends on a divalent metal cation as a cofactor.

The protein resides in the cytoplasm. It catalyses the reaction a ribonucleoside 5'-phosphate + H2O = a ribonucleoside + phosphate. Functionally, nucleotidase that shows phosphatase activity on nucleoside 5'-monophosphates. In Pseudomonas putida (strain ATCC 47054 / DSM 6125 / CFBP 8728 / NCIMB 11950 / KT2440), this protein is 5'-nucleotidase SurE.